Here is a 356-residue protein sequence, read N- to C-terminus: Stomatin-like protein 2, mitochondrial (356 aa).

Residues 1–28 (MLARAARGTGALLLKGSVQASARAPRRA) constitute a mitochondrion transit peptide. S17 bears the Phosphoserine; by PKC/PRKCZ mark. Phosphotyrosine is present on Y124. An N6-acetyllysine; alternate modification is found at K145. N6-succinyllysine; alternate is present on K145. The stretch at 215–252 (INVAEGKKQAQILASEAEKAEQINQAAGEASAVLAKAK) forms a coiled coil. K233 bears the N6-acetyllysine mark. Positions 326 to 356 (EAQDSVSSRSSRDVRSTDASLDEELDRVKLS) are disordered. The residue at position 330 (S330) is a Phosphoserine.

The protein belongs to the band 7/mec-2 family. Forms homooligomers. Interacts with MFN2; may form heterooligomers with this mediator of mitochondrial fusion. Interacts with PHB1 and PHB2; stabilizes and recruits them to cardiolipin-enriched mitochondrial membranes. Interacts with CACNA2D2.

Its subcellular location is the cell membrane. It localises to the mitochondrion. It is found in the mitochondrion inner membrane. The protein localises to the mitochondrion intermembrane space. The protein resides in the membrane raft. Its subcellular location is the cytoplasm. It localises to the cytoskeleton. In terms of biological role, mitochondrial protein that probably regulates the biogenesis and the activity of mitochondria. Stimulates cardiolipin biosynthesis, binds cardiolipin-enriched membranes where it recruits and stabilizes some proteins including prohibitin and may therefore act in the organization of functional microdomains in mitochondrial membranes. Through regulation of the mitochondrial function may play a role into several biological processes including cell migration, cell proliferation, T-cell activation, calcium homeostasis and cellular response to stress. May play a role in calcium homeostasis through negative regulation of calcium efflux from mitochondria. Required for mitochondrial hyperfusion a pro-survival cellular response to stress which results in increased ATP production by mitochondria. May also regulate the organization of functional domains at the plasma membrane and play a role in T-cell activation through association with the T-cell receptor signaling complex and its regulation. The protein is Stomatin-like protein 2, mitochondrial (STOML2) of Bos taurus (Bovine).